The sequence spans 343 residues: Protein RecA (343 aa).

Residue 64–71 (GPESSGKT) participates in ATP binding.

It belongs to the RecA family.

The protein localises to the cytoplasm. In terms of biological role, can catalyze the hydrolysis of ATP in the presence of single-stranded DNA, the ATP-dependent uptake of single-stranded DNA by duplex DNA, and the ATP-dependent hybridization of homologous single-stranded DNAs. It interacts with LexA causing its activation and leading to its autocatalytic cleavage. This Bacillus cereus (strain B4264) protein is Protein RecA.